Here is a 41-residue protein sequence, read N- to C-terminus: uncharacterized protein (41 aa).

The chain crosses the membrane as a helical span at residues 8-28 (IKKIAMFFLGILVGVFIVLFF).

The protein resides in the membrane. This is an uncharacterized protein from Streptococcus pneumoniae serotype 2 (strain D39 / NCTC 7466).